A 56-amino-acid polypeptide reads, in one-letter code: Metallothionein (56 aa).

Positions 9, 11, 14, 16, 32, 36, 40, 47, 49, 52, and 54 each coordinate Zn(2+).

Belongs to the metallothionein superfamily. Type 14 family.

Functionally, may play a role in essential metal ion homeostasis (especially zinc homeostasis) and resistance to certain non-essential metal ions. Binds four zinc ions. This chain is Metallothionein (smtA), found in Synechococcus elongatus (strain ATCC 33912 / PCC 7942 / FACHB-805) (Anacystis nidulans R2).